We begin with the raw amino-acid sequence, 656 residues long: Squalene-hopene cyclase (656 aa).

Residues 68 to 110 (EQKIANYLRRCQSREHWGWPVYYGGEFNISASVQAYFALKMTG) form a PFTB 1 repeat. The active-site Proton donor is the Asp-396. 4 PFTB repeats span residues 417–459 (LDRA…ALLD), 485–525 (IERG…NASG), 533–582 (VLKC…GLMA), and 591–634 (VKRG…QFFP).

The protein belongs to the terpene cyclase/mutase family.

It carries out the reaction squalene = hop-22(29)-ene. The catalysed reaction is squalene + H2O = hopan-22-ol. Squalene cyclase that catalyzes the oxygen-independent cyclization of squalene into hopanoids, a class of cyclic triterpenoids including hop-22(29)-ene, hop-17(21)-ene, hop-21(22)-ene, and hopan-22-ol. The sequence is that of Squalene-hopene cyclase from Schizosaccharomyces japonicus (strain yFS275 / FY16936) (Fission yeast).